Reading from the N-terminus, the 424-residue chain is Serine incorporator 5 (424 aa).

At 1–6 (MYALYF) the chain is on the extracellular side. A helical membrane pass occupies residues 7-23 (ILVVVLCCIMMSTTVAH). Residues 24–52 (KMKEHIPFFEDMCKGIKAGDTCEKLVGYS) lie on the Cytoplasmic side of the membrane. The chain crosses the membrane as a helical span at residues 53 to 73 (AVYRVCFGMACFFFIFCLLTL). Topologically, residues 74 to 87 (KINNSKSCRAHIHN) are extracellular. Asn-76 is a glycosylation site (N-linked (GlcNAc...) asparagine). Residues 88–108 (GFWFFKLLLLGAMCSGAFFIP) traverse the membrane as a helical segment. Topologically, residues 109–119 (DQDTFLNAWRY) are cytoplasmic. The chain crosses the membrane as a helical span at residues 120–140 (VGAVGGFLFIGIQLLLLVEFA). At 141-161 (HKWNKNWTAGTASNKLWYASL) the chain is on the extracellular side. Asn-146 carries an N-linked (GlcNAc...) asparagine glycan. A helical transmembrane segment spans residues 162 to 182 (ALVTLIMYSIATGGLVLMAVF). Topologically, residues 183–193 (YTQKDGCMENK) are cytoplasmic. Residues 194–214 (ILLGVNGGLCVLISLVAISPC) form a helical membrane-spanning segment. Over 215 to 221 (VQNRQPH) the chain is Extracellular. A helical transmembrane segment spans residues 222-242 (SGLLQSGVISCYVTYLTFSAL). Over 243-274 (SSKPAEVVLDEHGKNVTICVPDFGQDLYRDEN) the chain is Cytoplasmic. Residues 275–295 (LVTILGTSLLIGCILYSCLTS) traverse the membrane as a helical segment. Residues 296–348 (TTRSSSDALQGRYAAPELEIARCCFCFSPGGEDTEEQQQGKEGPRVIYDEKKG) are Extracellular-facing. Residues 349–369 (TVYIYSYFHFVFFLASLYVMM) form a helical membrane-spanning segment. At 370 to 391 (TVTNWFNYESANIESFFSGSWS) the chain is on the cytoplasmic side. Residues 392–412 (IFWVKMASCWICVLLYLCTLV) traverse the membrane as a helical segment. Topologically, residues 413–424 (APLCCPTREFSV) are extracellular.

The protein belongs to the TDE1 family.

The protein resides in the cell membrane. It carries out the reaction a 1,2-diacyl-sn-glycero-3-phospho-L-serine(in) = a 1,2-diacyl-sn-glycero-3-phospho-L-serine(out). It catalyses the reaction a 1,2-diacyl-sn-glycero-3-phosphocholine(in) = a 1,2-diacyl-sn-glycero-3-phosphocholine(out). The enzyme catalyses a 1,2-diacyl-sn-glycero-3-phosphoethanolamine(in) = a 1,2-diacyl-sn-glycero-3-phosphoethanolamine(out). Restriction factor required to restrict infectivity of gammaretroviruses: acts by inhibiting an early step of viral infection. Impairs the penetration of the viral particle into the cytoplasm. Non-ATP-dependent, non-specific lipid transporter for phosphatidylserine, phosphatidylcholine, and phosphatidylethanolamine. Functions as a scramblase that flips lipids in both directions across the membrane. Phospholipid scrambling results in gammaretroviral surface exposure of phosphatidylserine and loss of membrane asymmetry, which leads to loss of infectivity. Enhances the incorporation of serine into phosphatidylserine and sphingolipids. May play a role in providing serine molecules for the formation of myelin glycosphingolipids in oligodendrocytes. This Macaca fascicularis (Crab-eating macaque) protein is Serine incorporator 5 (SERINC5).